The chain runs to 31 residues: Delta-actitoxin-Dar1b (31 aa).

This sequence belongs to the sea anemone short toxin (type III) family. In terms of processing, contains 4 disulfide bonds.

Its subcellular location is the secreted. The protein resides in the nematocyst. Functionally, binds specifically to voltage-gated sodium channels (Nav), thereby delaying their inactivation during signal transduction. This is Delta-actitoxin-Dar1b from Dofleinia armata (Armed anemone).